The following is a 461-amino-acid chain: Nicotianamine aminotransferase A (461 aa).

A disordered region spans residues 1–29 (MVHQSNGHGEAAAAAANGKSNGHAAAANG). Low complexity predominate over residues 11-29 (AAAAAANGKSNGHAAAANG). At lysine 289 the chain carries N6-(pyridoxal phosphate)lysine.

Belongs to the class-I pyridoxal-phosphate-dependent aminotransferase family. It depends on pyridoxal 5'-phosphate as a cofactor. In terms of tissue distribution, expressed in roots, but not in leaves.

It carries out the reaction nicotianamine + 2-oxoglutarate = 3''-deamino-3''-oxonicotianamine + L-glutamate. Functionally, involved in biosynthesis of mugineic acid family phytosiderophores. This is Nicotianamine aminotransferase A from Hordeum vulgare (Barley).